Reading from the N-terminus, the 213-residue chain is Octanoyltransferase (213 aa).

The 179-residue stretch at 35 to 213 folds into the BPL/LPL catalytic domain; that stretch reads DKHGDAVLLL…ERHLPTLVGA (179 aa). Substrate contacts are provided by residues 73–80, 145–147, and 158–160; these read RGGKITWH, AIG, and GFS. Residue cysteine 176 is the Acyl-thioester intermediate of the active site.

It belongs to the LipB family.

Its subcellular location is the cytoplasm. The enzyme catalyses octanoyl-[ACP] + L-lysyl-[protein] = N(6)-octanoyl-L-lysyl-[protein] + holo-[ACP] + H(+). It functions in the pathway protein modification; protein lipoylation via endogenous pathway; protein N(6)-(lipoyl)lysine from octanoyl-[acyl-carrier-protein]: step 1/2. Functionally, catalyzes the transfer of endogenously produced octanoic acid from octanoyl-acyl-carrier-protein onto the lipoyl domains of lipoate-dependent enzymes. Lipoyl-ACP can also act as a substrate although octanoyl-ACP is likely to be the physiological substrate. This chain is Octanoyltransferase, found in Salinispora arenicola (strain CNS-205).